Reading from the N-terminus, the 193-residue chain is Penicillin-binding protein activator LpoB (193 aa).

A signal peptide spans Met-1–Gly-16. Residue Cys-17 is the site of N-palmitoyl cysteine attachment. Cys-17 carries the S-diacylglycerol cysteine lipid modification. The disordered stretch occupies residues Gln-23–Val-50. The segment covering Pro-37–Pro-46 has biased composition (pro residues).

It belongs to the LpoB family. As to quaternary structure, interacts with PBP1b.

The protein resides in the cell outer membrane. Regulator of peptidoglycan synthesis that is essential for the function of penicillin-binding protein 1B (PBP1b). This chain is Penicillin-binding protein activator LpoB, found in Proteus mirabilis (strain HI4320).